A 254-amino-acid chain; its full sequence is Thiazole synthase (254 aa).

The active-site Schiff-base intermediate with DXP is lysine 95. Residues glycine 156, 182-183, and 204-205 each bind 1-deoxy-D-xylulose 5-phosphate; these read AG and NT.

Belongs to the ThiG family. Homotetramer. Forms heterodimers with either ThiH or ThiS.

Its subcellular location is the cytoplasm. It carries out the reaction [ThiS sulfur-carrier protein]-C-terminal-Gly-aminoethanethioate + 2-iminoacetate + 1-deoxy-D-xylulose 5-phosphate = [ThiS sulfur-carrier protein]-C-terminal Gly-Gly + 2-[(2R,5Z)-2-carboxy-4-methylthiazol-5(2H)-ylidene]ethyl phosphate + 2 H2O + H(+). Its pathway is cofactor biosynthesis; thiamine diphosphate biosynthesis. Its function is as follows. Catalyzes the rearrangement of 1-deoxy-D-xylulose 5-phosphate (DXP) to produce the thiazole phosphate moiety of thiamine. Sulfur is provided by the thiocarboxylate moiety of the carrier protein ThiS. In vitro, sulfur can be provided by H(2)S. The chain is Thiazole synthase from Shewanella putrefaciens (strain CN-32 / ATCC BAA-453).